Here is a 32-residue protein sequence, read N- to C-terminus: DNA-binding protein HU (32 aa).

This sequence belongs to the bacterial histone-like protein family.

Functionally, histone-like DNA-binding protein which is capable of wrapping DNA to stabilize it, and thus to prevent its denaturation under extreme environmental conditions. This Synechocystis sp. (strain PCC 6701) protein is DNA-binding protein HU (hup).